Here is a 109-residue protein sequence, read N- to C-terminus: Elicitor peptide 2 (109 aa).

Residues 1 to 73 (MEKLDKRREE…KDDDVVVLLR (73 aa)) constitute a propeptide that is removed on maturation. Over residues 74-88 (DNKAKSKKRDKEKPS) the composition is skewed to basic and acidic residues. Residues 74–109 (DNKAKSKKRDKEKPSSGRPGQTNSVPNAAIQVYKED) are disordered.

This sequence belongs to the brassicaceae elicitor peptide family.

Elicitor of plant defense. This Arabidopsis thaliana (Mouse-ear cress) protein is Elicitor peptide 2 (PEP2).